The chain runs to 258 residues: NAD-dependent protein deacylase (258 aa).

A Deacetylase sirtuin-type domain is found at 3 to 258 (ERQLEKSIEH…LPALMRGLSA (256 aa)). 28-48 (GAGMSADSGLETYRDDKTGLW) contributes to the NAD(+) binding site. Positions 73 and 76 each coordinate substrate. 109-112 (QNID) lines the NAD(+) pocket. Catalysis depends on His-127, which acts as the Proton acceptor. The Zn(2+) site is built by Cys-135, Cys-138, Cys-161, and Cys-164. Residues 201–203 (GTS) and Ala-245 contribute to the NAD(+) site.

The protein belongs to the sirtuin family. Class III subfamily. The cofactor is Zn(2+).

It is found in the cytoplasm. The enzyme catalyses N(6)-acetyl-L-lysyl-[protein] + NAD(+) + H2O = 2''-O-acetyl-ADP-D-ribose + nicotinamide + L-lysyl-[protein]. It catalyses the reaction N(6)-succinyl-L-lysyl-[protein] + NAD(+) + H2O = 2''-O-succinyl-ADP-D-ribose + nicotinamide + L-lysyl-[protein]. NAD-dependent lysine deacetylase and desuccinylase that specifically removes acetyl and succinyl groups on target proteins. Modulates the activities of several proteins which are inactive in their acylated form. The polypeptide is NAD-dependent protein deacylase (Corynebacterium glutamicum (strain ATCC 13032 / DSM 20300 / JCM 1318 / BCRC 11384 / CCUG 27702 / LMG 3730 / NBRC 12168 / NCIMB 10025 / NRRL B-2784 / 534)).